We begin with the raw amino-acid sequence, 214 residues long: Large ribosomal subunit protein uL4c (214 aa).

The segment at 42–81 is disordered; the sequence is VKQSNEKRQGSANTKTRSEVRGGGRKPWRQKGTGRARAGS. The segment covering 64 to 75 has biased composition (basic residues); sequence GGRKPWRQKGTG.

The protein belongs to the universal ribosomal protein uL4 family. As to quaternary structure, part of the 50S ribosomal subunit.

The protein localises to the plastid. It is found in the chloroplast. Its function is as follows. Probably binds the 23S rRNA. This Pyropia yezoensis (Susabi-nori) protein is Large ribosomal subunit protein uL4c (rpl4).